Consider the following 223-residue polypeptide: TMF-regulated nuclear protein 1 (223 aa).

2 disordered regions span residues 1–84 and 196–223; these read MPGC…GPAG and GRLR…SPQR. Residues 21–54 show a composition bias toward pro residues; that stretch reads GSPPPPPREPLPSLQPPSPSPTSTPTPTKSPPLP. Positions 73–84 are enriched in gly residues; it reads ASGGSGGAGPAG.

In terms of assembly, interacts with TMF1; may regulate TRNP1 proteasomal degradation. Post-translationally, ubiquitinated, leading to its degradation by the proteasome. As to expression, expressed in brain and kidney (at protein level). Also detected in spleen and intestine.

It is found in the nucleus. DNA-binding factor that regulates the expression of a subset of genes and plays a key role in tangential, radial, and lateral expansion of the brain neocortex. Regulates neural stem cells proliferation and the production of intermediate neural progenitors and basal radial glial cells affecting the process of cerebral cortex gyrification. May control the proliferation rate of cells by regulating their progression through key cell-cycle transition points. This is TMF-regulated nuclear protein 1 (Trnp1) from Mus musculus (Mouse).